The chain runs to 296 residues: Protoheme IX farnesyltransferase (296 aa).

At 1–9 (MMFKQYLQV) the chain is on the cytoplasmic side. The chain crosses the membrane as a helical span at residues 10–28 (TKPGIIFGNLISVIGGFLL). Residues 29-37 (ASKGSIDYP) are Periplasmic-facing. Residues 38 to 56 (LFIYTLVGVSLVVASGCVF) traverse the membrane as a helical segment. At 57-78 (NNYIDRDIDRKMERTKNRVLVK) the chain is on the cytoplasmic side. The chain crosses the membrane as a helical span at residues 79 to 97 (GLISPAVSLVYATLLGFAG). The Periplasmic portion of the chain corresponds to 98-107 (FMLLWFGANP). Residues 108 to 126 (LACWLGVMGFVVYVGVYSL) traverse the membrane as a helical segment. Over 127–197 (YMKRHSVYGT…YQAANIPVLP (71 aa)) the chain is Cytoplasmic. Residues 198 to 216 (VVKGISVAKNHITLYIIAF) traverse the membrane as a helical segment. Topologically, residues 217-228 (AVATLMLSLGGY) are periplasmic. Residues 229 to 247 (AGYKYLVVAAAVSVWWLGM) traverse the membrane as a helical segment. Over 248–268 (ALRGYKVADDRIWARKLFGFS) the chain is Cytoplasmic. Residues 269 to 287 (IIAITALSVMMSVDFMVPD) form a helical membrane-spanning segment. At 288 to 296 (SHTLLAAVW) the chain is on the periplasmic side.

Belongs to the UbiA prenyltransferase family. Protoheme IX farnesyltransferase subfamily.

Its subcellular location is the cell inner membrane. It catalyses the reaction heme b + (2E,6E)-farnesyl diphosphate + H2O = Fe(II)-heme o + diphosphate. It participates in porphyrin-containing compound metabolism; heme O biosynthesis; heme O from protoheme: step 1/1. Functionally, converts heme B (protoheme IX) to heme O by substitution of the vinyl group on carbon 2 of heme B porphyrin ring with a hydroxyethyl farnesyl side group. The chain is Protoheme IX farnesyltransferase from Shigella sonnei (strain Ss046).